A 493-amino-acid chain; its full sequence is ATP synthase subunit beta, chloroplastic (493 aa).

170-177 (GGAGVGKT) is a binding site for ATP.

It belongs to the ATPase alpha/beta chains family. In terms of assembly, F-type ATPases have 2 components, CF(1) - the catalytic core - and CF(0) - the membrane proton channel. CF(1) has five subunits: alpha(3), beta(3), gamma(1), delta(1), epsilon(1). CF(0) has four main subunits: a(1), b(1), b'(1) and c(9-12).

Its subcellular location is the plastid. The protein resides in the chloroplast thylakoid membrane. The catalysed reaction is ATP + H2O + 4 H(+)(in) = ADP + phosphate + 5 H(+)(out). Functionally, produces ATP from ADP in the presence of a proton gradient across the membrane. The catalytic sites are hosted primarily by the beta subunits. The sequence is that of ATP synthase subunit beta, chloroplastic from Staurastrum punctulatum (Green alga).